The chain runs to 205 residues: Protein GrpE (205 aa).

A disordered region spans residues 172–205 (KGSTGPGAPAEPAAAPNPYASNGADTGGSFDTKA). The segment covering 177–195 (PGAPAEPAAAPNPYASNGA) has biased composition (low complexity).

It belongs to the GrpE family. Homodimer.

The protein localises to the cytoplasm. Participates actively in the response to hyperosmotic and heat shock by preventing the aggregation of stress-denatured proteins, in association with DnaK and GrpE. It is the nucleotide exchange factor for DnaK and may function as a thermosensor. Unfolded proteins bind initially to DnaJ; upon interaction with the DnaJ-bound protein, DnaK hydrolyzes its bound ATP, resulting in the formation of a stable complex. GrpE releases ADP from DnaK; ATP binding to DnaK triggers the release of the substrate protein, thus completing the reaction cycle. Several rounds of ATP-dependent interactions between DnaJ, DnaK and GrpE are required for fully efficient folding. In Caulobacter sp. (strain K31), this protein is Protein GrpE.